The sequence spans 420 residues: Pectate lyase (420 aa).

The first 21 residues, 1–21, serve as a signal peptide directing secretion; sequence MKKVMLATALFLGLTPAGANA. Residues 117-139 are disordered; that stretch reads TWGKKEPSGTQEEARARSQKNQK. Positions 119–132 are enriched in basic and acidic residues; it reads GKKEPSGTQEEARA. 3 residues coordinate Ca(2+): aspartate 205, aspartate 244, and aspartate 248. Arginine 300 is a catalytic residue.

This sequence belongs to the polysaccharide lyase 1 family. As to quaternary structure, monomer. Requires Ca(2+) as cofactor.

Its subcellular location is the secreted. It catalyses the reaction Eliminative cleavage of (1-&gt;4)-alpha-D-galacturonan to give oligosaccharides with 4-deoxy-alpha-D-galact-4-enuronosyl groups at their non-reducing ends.. The protein operates within glycan metabolism; pectin degradation; 2-dehydro-3-deoxy-D-gluconate from pectin: step 2/5. In terms of biological role, produces unsaturated products from polygalacturonate. In Bacillus subtilis (strain 168), this protein is Pectate lyase (pel).